Reading from the N-terminus, the 125-residue chain is Acyl carrier protein, mitochondrial (125 aa).

The N-terminal 36 residues, 1–36 (MFRSVCRISSRVAPSAYRTIMGRSVMSNTILAQRFY), are a transit peptide targeting the mitochondrion. The Carrier domain occupies 43 to 122 (DQVSQRVIDV…ETVDYIASNP (80 aa)). O-(pantetheine 4'-phosphoryl)serine is present on Ser82.

This sequence belongs to the acyl carrier protein (ACP) family. As to quaternary structure, complex I is composed of about 30 different subunits. Post-translationally, 4'-phosphopantetheine is transferred from CoA to a specific serine of apo-ACP by acpS. This modification is essential for activity because fatty acids are bound in thioester linkage to the sulfhydryl of the prosthetic group.

The protein resides in the mitochondrion. Its pathway is lipid metabolism; fatty acid biosynthesis. Functionally, carrier of the growing fatty acid chain in fatty acid biosynthesis. May be involved in the synthesis of very-long-chain fatty acids. Accessory and non-catalytic subunit of the mitochondrial membrane respiratory chain NADH dehydrogenase (Complex I), which functions in the transfer of electrons from NADH to the respiratory chain. This chain is Acyl carrier protein, mitochondrial (ACP1), found in Saccharomyces cerevisiae (strain ATCC 204508 / S288c) (Baker's yeast).